The primary structure comprises 226 residues: MADINKYIPMVDAILSVSNPDEISPKRVRKALQILYSVNLDSQRKLINELILERFGDIQENPRVLIPKNDLISRDQELSLRLQKEEERPLRSTRKRKGKSESKSKRKKKKNDSPDSNSISVRKVLLSAPLQKFLGSEELPRTQVVKMIWQYIKEHDLQNPKDRREILCDEKMEPIFGKKMTMFSMNKLLTKHLFNPDEIVKHEEEQKQTPEKEIKLENESLPNLSG.

The DEK-C domain occupies 1-56 (MADINKYIPMVDAILSVSNPDEISPKRVRKALQILYSVNLDSQRKLINELILERFG). Residues 83–118 (QKEEERPLRSTRKRKGKSESKSKRKKKKNDSPDSNS) are disordered. Positions 91-110 (RSTRKRKGKSESKSKRKKKK) are enriched in basic residues. Ser-113 is subject to Phosphoserine. The 77-residue stretch at 119–195 (ISVRKVLLSA…NKLLTKHLFN (77 aa)) folds into the SWIB/MDM2 domain. Residues 200-218 (VKHEEEQKQTPEKEIKLEN) show a composition bias toward basic and acidic residues. The segment at 200-226 (VKHEEEQKQTPEKEIKLENESLPNLSG) is disordered. Glycyl lysine isopeptide (Lys-Gly) (interchain with G-Cter in SUMO) cross-links involve residues Lys-201 and Lys-215. Ser-225 bears the Phosphoserine mark.

It is found in the cytoplasm. The protein resides in the nucleus. It localises to the nucleolus. May be involved in transcription regulation. This chain is Protein TRI1 (TRI1), found in Saccharomyces cerevisiae (strain ATCC 204508 / S288c) (Baker's yeast).